A 271-amino-acid chain; its full sequence is Aquaporin-2 (271 aa).

Topologically, residues 1-11 (MWELRSIAFSR) are cytoplasmic. The chain crosses the membrane as a helical span at residues 12–32 (AVFAEFLATLLFVFFGLGSAL). Over 33 to 40 (NWPQALPS) the chain is Extracellular. Residues 41–59 (VLQIAMAFGLGIGTLVQAL) form a helical membrane-spanning segment. The Cytoplasmic portion of the chain corresponds to 60-64 (GHISG). Positions 65–74 (AHINPAVTVA) form an intramembrane region, discontinuously helical. The NPA 1 motif lies at 68 to 70 (NPA). Over 75-85 (CLVGCHVSVLR) the chain is Cytoplasmic. A helical transmembrane segment spans residues 86–107 (AAFYVAAQLLGAVAGAALLHEI). The Extracellular portion of the chain corresponds to 108–127 (TPADIRGDLAVNALSNSTTA). N-linked (GlcNAc...) asparagine glycosylation is present at N123. Residues 128–148 (GQAVTVELFLTLQLVLCIFAS) traverse the membrane as a helical segment. The Cytoplasmic portion of the chain corresponds to 149–156 (TDERRGEN). The helical transmembrane segment at 157 to 176 (PGTPALSIGFSVALGHLLGI) threads the bilayer. Residues 177-180 (HYTG) are Extracellular-facing. The segment at residues 181–193 (CSMNPARSLAPAV) is an intramembrane region (discontinuously helical). An NPA 2 motif is present at residues 184–186 (NPA). The Extracellular portion of the chain corresponds to 194-201 (VTGKFDDH). Residues 202–222 (WVFWIGPLVGAILGSLLYNYV) traverse the membrane as a helical segment. Over 223 to 271 (LFPPAKSLSERLAVLKGLEPDTDWEEREVRRRQSVELHSPQSLPRGTKA) the chain is Cytoplasmic. The disordered stretch occupies residues 248–271 (EREVRRRQSVELHSPQSLPRGTKA). Position 256 is a phosphoserine; by PKA (S256). Positions 261-271 (SPQSLPRGTKA) are enriched in polar residues.

Belongs to the MIP/aquaporin (TC 1.A.8) family. As to quaternary structure, homotetramer. Interacts with micropeptide MIAC; the interaction leads to a reduction of filamentous actin fibers and inhibition of the EREG/EGFR signaling pathway. In terms of processing, ser-256 phosphorylation is necessary and sufficient for expression at the apical membrane. Endocytosis is not phosphorylation-dependent. Post-translationally, N-glycosylated. As to expression, expressed in collecting tubules in kidney medulla (at protein level). Detected in kidney.

The protein resides in the apical cell membrane. It localises to the basolateral cell membrane. Its subcellular location is the cell membrane. The protein localises to the cytoplasmic vesicle membrane. It is found in the golgi apparatus. The protein resides in the trans-Golgi network membrane. The catalysed reaction is H2O(in) = H2O(out). It catalyses the reaction glycerol(in) = glycerol(out). Functionally, forms a water-specific channel that provides the plasma membranes of renal collecting duct with high permeability to water, thereby permitting water to move in the direction of an osmotic gradient. Plays an essential role in renal water homeostasis. Could also be permeable to glycerol. The polypeptide is Aquaporin-2 (Homo sapiens (Human)).